The sequence spans 74 residues: Somatostatin-2 (74 aa).

Residues 1–46 (ARGAGLLSQDWSAVEDLLAQMSLPEADAQREAEVVSVATGGRLNLE) constitute a propeptide that is removed on maturation. Cys63 and Cys74 form a disulfide bridge.

Belongs to the somatostatin family.

It is found in the secreted. Functionally, somatostatin inhibits the release of somatotropin. The protein is Somatostatin-2 (sst2) of Myoxocephalus scorpius (Shorthorn sculpin).